The chain runs to 170 residues: Cytochrome bc1 complex Rieske iron-sulfur subunit (170 aa).

The region spanning 63–153 (KAALMIIRLE…IGVNDEGYLE (91 aa)) is the Rieske domain. [2Fe-2S] cluster contacts are provided by cysteine 96, histidine 98, cysteine 115, and histidine 118. Cysteine 101 and cysteine 117 are disulfide-bonded.

In terms of assembly, the cytochrome bc1 complex is composed of a cytochrome b (QcrB), the Rieske iron-sulfur protein (QcrA) and a diheme cytochrome c (QcrC) subunit. It depends on [2Fe-2S] cluster as a cofactor.

It is found in the cell membrane. In terms of biological role, iron-sulfur subunit of the cytochrome bc1 complex, an essential component of the respiratory electron transport chain required for ATP synthesis. The bc1 complex catalyzes the oxidation of menaquinol and the reduction of cytochrome c in the respiratory chain. The bc1 complex operates through a Q-cycle mechanism that couples electron transfer to generation of the proton gradient that drives ATP synthesis. This is Cytochrome bc1 complex Rieske iron-sulfur subunit (qcrA) from Streptomyces lividans.